The following is a 512-amino-acid chain: Bifunctional purine biosynthesis protein PurH (512 aa).

An MGS-like domain is found at 1-144; sequence MKRALVSVSD…KNYHDVTIVV (144 aa).

Belongs to the PurH family.

The catalysed reaction is (6R)-10-formyltetrahydrofolate + 5-amino-1-(5-phospho-beta-D-ribosyl)imidazole-4-carboxamide = 5-formamido-1-(5-phospho-D-ribosyl)imidazole-4-carboxamide + (6S)-5,6,7,8-tetrahydrofolate. The enzyme catalyses IMP + H2O = 5-formamido-1-(5-phospho-D-ribosyl)imidazole-4-carboxamide. It participates in purine metabolism; IMP biosynthesis via de novo pathway; 5-formamido-1-(5-phospho-D-ribosyl)imidazole-4-carboxamide from 5-amino-1-(5-phospho-D-ribosyl)imidazole-4-carboxamide (10-formyl THF route): step 1/1. It functions in the pathway purine metabolism; IMP biosynthesis via de novo pathway; IMP from 5-formamido-1-(5-phospho-D-ribosyl)imidazole-4-carboxamide: step 1/1. In Limosilactobacillus reuteri (strain DSM 20016) (Lactobacillus reuteri), this protein is Bifunctional purine biosynthesis protein PurH.